The sequence spans 160 residues: uncharacterized protein (160 aa).

Residues 1–29 form the signal peptide; sequence MTGKTHIMGGIASCTAAAYYYGFDPVLMA. 2 helical membrane-spanning segments follow: residues 67-87 and 137-157; these read TFTH…TYIP and QLVL…LFHG.

The protein to E.coli YdjM.

The protein resides in the cell membrane. This is an uncharacterized protein from Bacillus subtilis (strain 168).